A 112-amino-acid polypeptide reads, in one-letter code: Protein FAM32A (112 aa).

Positions 23–56 (TKRKKKKKDKDKAKMLEAMGTSKKSEEEKRRCLD) are disordered. Residues 45–56 (KKSEEEKRRCLD) show a composition bias toward basic and acidic residues.

This sequence belongs to the FAM32 family. Widely expressed, with highest level in pancreas and lowest in muscle.

Its subcellular location is the nucleus. Its function is as follows. May induce G2 arrest and apoptosis. May also increase cell sensitivity to apoptotic stimuli. In cell lines, may play a role in the inhibition of anchor-independent cell growth. The chain is Protein FAM32A (Fam32a) from Mus musculus (Mouse).